The primary structure comprises 93 residues: Pancreatic polypeptide prohormone (93 aa).

The first 29 residues, Met1 to Gly29, serve as a signal peptide directing secretion. Tyrosine amide is present on Tyr65. Positions Glu89–Glu93 are excised as a propeptide.

It belongs to the NPY family.

It is found in the secreted. Hormone secreted by pancreatic cells that acts as a regulator of pancreatic and gastrointestinal functions probably by signaling through the G protein-coupled receptor NPY4R2. The sequence is that of Pancreatic polypeptide prohormone (PPY) from Canis lupus familiaris (Dog).